The chain runs to 354 residues: Carbonic anhydrase 12 (354 aa).

An N-terminal signal peptide occupies residues 1–24 (MPRRSLHAAAVLLLVILKEQPSSP). At 25–301 (APVNGSKWTY…VQVCTAAGLS (277 aa)) the chain is on the extracellular side. N-linked (GlcNAc...) asparagine glycans are attached at residues asparagine 28 and asparagine 80. The region spanning 30–289 (SKWTYFGPDG…FDERLVYTSF (260 aa)) is the Alpha-carbonic anhydrase domain. A disulfide bridge links cysteine 50 with cysteine 230. The active-site Proton donor/acceptor is histidine 94. Zn(2+) contacts are provided by histidine 119, histidine 121, and histidine 145. Residue asparagine 162 is glycosylated (N-linked (GlcNAc...) asparagine). 226–227 (TT) contributes to the substrate binding site. Residues 302–322 (LGIILSLALAGILGICIVVVV) form a helical membrane-spanning segment. Residues 323–354 (SIWLFRRKSIKKGDNKGVIYKPATKMETEAHA) lie on the Cytoplasmic side of the membrane.

This sequence belongs to the alpha-carbonic anhydrase family. Homodimer. Zn(2+) is required as a cofactor. As to expression, highly expressed in colon, kidney, prostate, intestine and activated lymphocytes. Expressed at much higher levels in the renal cell cancers than in surrounding normal kidney tissue. Moderately expressed in pancreas, ovary and testis. Expressed in sweat glands and bronchiolar epithelium.

It is found in the membrane. The protein localises to the cell membrane. It carries out the reaction hydrogencarbonate + H(+) = CO2 + H2O. With respect to regulation, inhibited by coumarins, saccharin, sulfonamide derivatives such as acetazolamide (AZA), benzenesulfonamide and derivatives (4-carboxyethylbenzene-sulfonamide, 4-carboxyethylbenzene-sulfonamide ethyl ester, 4-(acetyl-2-aminoethyl)benzene-sulfonamide, 4-aminoethylbenzene-sulfonamide) and Foscarnet (phosphonoformate trisodium salt). In terms of biological role, reversible hydration of carbon dioxide. The polypeptide is Carbonic anhydrase 12 (Homo sapiens (Human)).